A 230-amino-acid chain; its full sequence is 3,4-dihydroxy-2-butanone 4-phosphate synthase (230 aa).

D-ribulose 5-phosphate contacts are provided by residues 38–39 (RE), Asp-43, 151–155 (RRGHT), and Glu-175. Mg(2+) is bound at residue Glu-39. His-154 provides a ligand contact to Mg(2+).

Belongs to the DHBP synthase family. In terms of assembly, homodimer. Requires Mg(2+) as cofactor. It depends on Mn(2+) as a cofactor.

It catalyses the reaction D-ribulose 5-phosphate = (2S)-2-hydroxy-3-oxobutyl phosphate + formate + H(+). It functions in the pathway cofactor biosynthesis; riboflavin biosynthesis; 2-hydroxy-3-oxobutyl phosphate from D-ribulose 5-phosphate: step 1/1. In terms of biological role, catalyzes the conversion of D-ribulose 5-phosphate to formate and 3,4-dihydroxy-2-butanone 4-phosphate. This is 3,4-dihydroxy-2-butanone 4-phosphate synthase from Vibrio harveyi (Beneckea harveyi).